Here is a 260-residue protein sequence, read N- to C-terminus: UPF0246 protein BceJ2315_22780 (260 aa).

Belongs to the UPF0246 family.

This chain is UPF0246 protein BceJ2315_22780, found in Burkholderia cenocepacia (strain ATCC BAA-245 / DSM 16553 / LMG 16656 / NCTC 13227 / J2315 / CF5610) (Burkholderia cepacia (strain J2315)).